Here is a 172-residue protein sequence, read N- to C-terminus: RNA pyrophosphohydrolase (172 aa).

One can recognise a Nudix hydrolase domain in the interval 6–149; that stretch reads GYRLNVGIVI…KRDVYRRAMK (144 aa). The Nudix box signature appears at 38-59; it reads GGIDDGESPEQAMFRELYEEVG.

The protein belongs to the Nudix hydrolase family. RppH subfamily. A divalent metal cation serves as cofactor.

Its function is as follows. Accelerates the degradation of transcripts by removing pyrophosphate from the 5'-end of triphosphorylated RNA, leading to a more labile monophosphorylated state that can stimulate subsequent ribonuclease cleavage. The sequence is that of RNA pyrophosphohydrolase from Vibrio cholerae serotype O1 (strain ATCC 39315 / El Tor Inaba N16961).